The primary structure comprises 435 residues: NADH-quinone oxidoreductase subunit D (435 aa).

This sequence belongs to the complex I 49 kDa subunit family. As to quaternary structure, NDH-1 is composed of 14 different subunits. Subunits NuoB, C, D, E, F, and G constitute the peripheral sector of the complex.

The protein resides in the cell inner membrane. The catalysed reaction is a quinone + NADH + 5 H(+)(in) = a quinol + NAD(+) + 4 H(+)(out). Its function is as follows. NDH-1 shuttles electrons from NADH, via FMN and iron-sulfur (Fe-S) centers, to quinones in the respiratory chain. The immediate electron acceptor for the enzyme in this species is believed to be ubiquinone. Couples the redox reaction to proton translocation (for every two electrons transferred, four hydrogen ions are translocated across the cytoplasmic membrane), and thus conserves the redox energy in a proton gradient. The sequence is that of NADH-quinone oxidoreductase subunit D from Xanthomonas oryzae pv. oryzae (strain MAFF 311018).